The following is a 293-amino-acid chain: MPSLKDLRNRIASVKATQKITKAMQMVASAKLRRAQLAAEAARPYAERMDEVLASLASIVGTGPDAPKLLAGNGYDRTHLLVVCTAERGLCGGFNASIARLARDTAEKLIAEGKKVKILCVGKKGYDLLKRQFGEQILELIELRSVRTIGFVNAEAIGRKILNLYKDAEFDVCTLFFAKFRTVLHQIPTAQQLIPLAVKTQEDAPAAPPSLYEYEPSEEQILATLLPRNITIQVLRALLENAASEQGARMSAMDNASRNAGEMIKKQTLKYNRSRQAMITKELIEIISGAEAL.

It belongs to the ATPase gamma chain family. In terms of assembly, F-type ATPases have 2 components, CF(1) - the catalytic core - and CF(0) - the membrane proton channel. CF(1) has five subunits: alpha(3), beta(3), gamma(1), delta(1), epsilon(1). CF(0) has three main subunits: a, b and c.

The protein localises to the cell inner membrane. In terms of biological role, produces ATP from ADP in the presence of a proton gradient across the membrane. The gamma chain is believed to be important in regulating ATPase activity and the flow of protons through the CF(0) complex. The protein is ATP synthase gamma chain of Beijerinckia indica subsp. indica (strain ATCC 9039 / DSM 1715 / NCIMB 8712).